We begin with the raw amino-acid sequence, 438 residues long: Mannan endo-1,4-beta-mannosidase F (438 aa).

Residues Met-1–Ala-17 form the signal peptide. The 36-residue stretch at Gln-19–Gln-54 folds into the CBM1 domain. Positions Ser-60–Ser-96 are ser-rich linker. Positions Thr-61 to Ser-86 are enriched in low complexity. The disordered stretch occupies residues Thr-61–Thr-92. A catalytic region spans residues Phe-97–Leu-438. Substrate contacts are provided by Trp-149 and Asn-263. Glu-264 functions as the Proton donor in the catalytic mechanism. N-linked (GlcNAc...) asparagine glycosylation is present at Asn-277. Residue Tyr-339 coordinates substrate. Catalysis depends on Glu-373, which acts as the Nucleophile. Trp-402 contacts substrate.

Belongs to the glycosyl hydrolase 5 (cellulase A) family.

It localises to the secreted. The catalysed reaction is Random hydrolysis of (1-&gt;4)-beta-D-mannosidic linkages in mannans, galactomannans and glucomannans.. In terms of biological role, endo-1,4-mannanase, a crucial enzyme for depolymerization of seed galactomannans and wood galactoglucomannans. The sequence is that of Mannan endo-1,4-beta-mannosidase F (manF) from Aspergillus fumigatus (strain ATCC MYA-4609 / CBS 101355 / FGSC A1100 / Af293) (Neosartorya fumigata).